The following is a 61-amino-acid chain: Small ribosomal subunit protein uS14 (61 aa).

The Zn(2+) site is built by C24, C27, C40, and C43.

It belongs to the universal ribosomal protein uS14 family. Zinc-binding uS14 subfamily. As to quaternary structure, part of the 30S ribosomal subunit. Contacts proteins S3 and S10. It depends on Zn(2+) as a cofactor.

In terms of biological role, binds 16S rRNA, required for the assembly of 30S particles and may also be responsible for determining the conformation of the 16S rRNA at the A site. The protein is Small ribosomal subunit protein uS14 of Frankia alni (strain DSM 45986 / CECT 9034 / ACN14a).